Consider the following 743-residue polypeptide: Polyribonucleotide nucleotidyltransferase (743 aa).

Mg(2+) is bound by residues Asp-494 and Asp-500. The KH domain maps to 561 to 620; sequence PQHAEVFVNPDIIRLIIGPGGKNIKAITAATGASVDIEDSGRVSIFAPTAEALEKAREMV. Residues 630-704 form the S1 motif domain; the sequence is GKNYNAKVRK…SRKAVLLEEQ (75 aa). The disordered stretch occupies residues 702 to 743; that stretch reads EEQGHPWNPEDTARPQRSDRGDRGDRRGDRGGRDRRDRGDRR. The span at 712–743 shows a compositional bias: basic and acidic residues; the sequence is DTARPQRSDRGDRGDRRGDRGGRDRRDRGDRR.

It belongs to the polyribonucleotide nucleotidyltransferase family. Mg(2+) serves as cofactor.

Its subcellular location is the cytoplasm. The enzyme catalyses RNA(n+1) + phosphate = RNA(n) + a ribonucleoside 5'-diphosphate. Functionally, involved in mRNA degradation. Catalyzes the phosphorolysis of single-stranded polyribonucleotides processively in the 3'- to 5'-direction. This Desulfovibrio desulfuricans (strain ATCC 27774 / DSM 6949 / MB) protein is Polyribonucleotide nucleotidyltransferase.